The chain runs to 506 residues: Maturase K (506 aa).

It belongs to the intron maturase 2 family. MatK subfamily.

It localises to the plastid. Its subcellular location is the chloroplast. Usually encoded in the trnK tRNA gene intron. Probably assists in splicing its own and other chloroplast group II introns. The sequence is that of Maturase K from Jasminum nudiflorum (Winter jasmine).